The chain runs to 464 residues: Argininosuccinate lyase 2 (464 aa).

Belongs to the lyase 1 family. Argininosuccinate lyase subfamily.

It localises to the cytoplasm. It carries out the reaction 2-(N(omega)-L-arginino)succinate = fumarate + L-arginine. Its pathway is amino-acid biosynthesis; L-arginine biosynthesis; L-arginine from L-ornithine and carbamoyl phosphate: step 3/3. The polypeptide is Argininosuccinate lyase 2 (Pseudomonas fluorescens (strain Pf0-1)).